The primary structure comprises 1025 residues: Multidrug resistance protein MdtC (1025 aa).

Helical transmembrane passes span 3-23, 333-353, 360-380, 387-407, 431-451, 463-483, 528-548, 853-873, 875-895, 897-917, 953-973, and 984-1004; these read FFAL…AITL, EVEQ…FLFL, IIPA…MYLC, LSLM…IVVL, VGFT…PLLL, FAVT…TLTP, LVGV…ISIP, VILI…LYES, VHPL…LLAL, LFNA…IGIV, PIMM…LSGG, and ITIV…TPVV.

This sequence belongs to the resistance-nodulation-cell division (RND) (TC 2.A.6) family. MdtC subfamily. Part of a tripartite efflux system composed of MdtA, MdtB and MdtC. MdtC forms a heteromultimer with MdtB.

Its subcellular location is the cell inner membrane. The MdtABC tripartite complex confers resistance against novobiocin and deoxycholate. This Escherichia coli O17:K52:H18 (strain UMN026 / ExPEC) protein is Multidrug resistance protein MdtC.